Here is a 232-residue protein sequence, read N- to C-terminus: Phosphatidylserine decarboxylase proenzyme (232 aa).

S190 functions as the Schiff-base intermediate with substrate; via pyruvic acid in the catalytic mechanism. S190 is subject to Pyruvic acid (Ser); by autocatalysis.

Belongs to the phosphatidylserine decarboxylase family. PSD-A subfamily. Heterodimer of a large membrane-associated beta subunit and a small pyruvoyl-containing alpha subunit. It depends on pyruvate as a cofactor. Is synthesized initially as an inactive proenzyme. Formation of the active enzyme involves a self-maturation process in which the active site pyruvoyl group is generated from an internal serine residue via an autocatalytic post-translational modification. Two non-identical subunits are generated from the proenzyme in this reaction, and the pyruvate is formed at the N-terminus of the alpha chain, which is derived from the carboxyl end of the proenzyme. The post-translation cleavage follows an unusual pathway, termed non-hydrolytic serinolysis, in which the side chain hydroxyl group of the serine supplies its oxygen atom to form the C-terminus of the beta chain, while the remainder of the serine residue undergoes an oxidative deamination to produce ammonia and the pyruvoyl prosthetic group on the alpha chain.

Its subcellular location is the cell membrane. The catalysed reaction is a 1,2-diacyl-sn-glycero-3-phospho-L-serine + H(+) = a 1,2-diacyl-sn-glycero-3-phosphoethanolamine + CO2. The protein operates within phospholipid metabolism; phosphatidylethanolamine biosynthesis; phosphatidylethanolamine from CDP-diacylglycerol: step 2/2. Functionally, catalyzes the formation of phosphatidylethanolamine (PtdEtn) from phosphatidylserine (PtdSer). The chain is Phosphatidylserine decarboxylase proenzyme from Rhodopseudomonas palustris (strain TIE-1).